We begin with the raw amino-acid sequence, 345 residues long: S-adenosylmethionine:tRNA ribosyltransferase-isomerase (345 aa).

This sequence belongs to the QueA family. As to quaternary structure, monomer.

It is found in the cytoplasm. The catalysed reaction is 7-aminomethyl-7-carbaguanosine(34) in tRNA + S-adenosyl-L-methionine = epoxyqueuosine(34) in tRNA + adenine + L-methionine + 2 H(+). Its pathway is tRNA modification; tRNA-queuosine biosynthesis. In terms of biological role, transfers and isomerizes the ribose moiety from AdoMet to the 7-aminomethyl group of 7-deazaguanine (preQ1-tRNA) to give epoxyqueuosine (oQ-tRNA). The sequence is that of S-adenosylmethionine:tRNA ribosyltransferase-isomerase from Aromatoleum aromaticum (strain DSM 19018 / LMG 30748 / EbN1) (Azoarcus sp. (strain EbN1)).